Here is a 452-residue protein sequence, read N- to C-terminus: Phosphoglucosamine mutase (452 aa).

Serine 103 serves as the catalytic Phosphoserine intermediate. Mg(2+) is bound by residues serine 103, aspartate 244, aspartate 246, and aspartate 248. Position 103 is a phosphoserine (serine 103).

This sequence belongs to the phosphohexose mutase family. Mg(2+) is required as a cofactor. Activated by phosphorylation.

It carries out the reaction alpha-D-glucosamine 1-phosphate = D-glucosamine 6-phosphate. Its function is as follows. Catalyzes the conversion of glucosamine-6-phosphate to glucosamine-1-phosphate. In Rhodospirillum rubrum (strain ATCC 11170 / ATH 1.1.1 / DSM 467 / LMG 4362 / NCIMB 8255 / S1), this protein is Phosphoglucosamine mutase.